Reading from the N-terminus, the 518-residue chain is Glutamate--cysteine ligase (518 aa).

The protein belongs to the glutamate--cysteine ligase type 1 family. Type 1 subfamily.

It catalyses the reaction L-cysteine + L-glutamate + ATP = gamma-L-glutamyl-L-cysteine + ADP + phosphate + H(+). It participates in sulfur metabolism; glutathione biosynthesis; glutathione from L-cysteine and L-glutamate: step 1/2. The chain is Glutamate--cysteine ligase from Escherichia fergusonii (strain ATCC 35469 / DSM 13698 / CCUG 18766 / IAM 14443 / JCM 21226 / LMG 7866 / NBRC 102419 / NCTC 12128 / CDC 0568-73).